The chain runs to 118 residues: Disulfide bond formation protein (118 aa).

Positions 1–27 (MRAKWLWMTAVGSLLITVLTAWGWAAA) are cleaved as a signal peptide. Positions 28 to 114 (SSQDSKIVYV…VAEAVLRSFF (87 aa)) constitute a Thioredoxin domain. Cysteines 42 and 45 form a disulfide.

The protein belongs to the thioredoxin family.

The protein resides in the secreted. Stimulates the oxidation and reduction of disulfide bonds in vitro. This Brevibacillus choshinensis protein is Disulfide bond formation protein (bdb).